Reading from the N-terminus, the 231-residue chain is Uroporphyrinogen-III C-methyltransferase (231 aa).

Residues Pro-10, 85–87 (GGD), 115–116 (TS), Met-166, and Ala-218 contribute to the S-adenosyl-L-homocysteine site.

It belongs to the precorrin methyltransferase family. Homodimer.

The enzyme catalyses uroporphyrinogen III + 2 S-adenosyl-L-methionine = precorrin-2 + 2 S-adenosyl-L-homocysteine + H(+). The catalysed reaction is uroporphyrinogen III + S-adenosyl-L-methionine = precorrin-1 + S-adenosyl-L-homocysteine + H(+). It catalyses the reaction precorrin-1 + S-adenosyl-L-methionine = precorrin-2 + S-adenosyl-L-homocysteine. It functions in the pathway cofactor biosynthesis; adenosylcobalamin biosynthesis; precorrin-2 from uroporphyrinogen III: step 1/1. Its activity is regulated as follows. Does not show substrate inhibition at uroporphyrinogen III concentrations of up to 20 uM, in contrast to SUMT from Sinorhizobium (previously believed to be P.denitrificans). In terms of biological role, catalyzes the two successive C-2 and C-7 methylation reactions involved in the conversion of uroporphyrinogen III to precorrin-2 via the intermediate formation of precorrin-1. It is a step in the biosynthesis of both cobalamin (vitamin B12) and coenzyme F430. In Methanobacterium ivanovii, this protein is Uroporphyrinogen-III C-methyltransferase (cobA).